A 132-amino-acid polypeptide reads, in one-letter code: uncharacterized protein (132 aa).

Transmembrane regions (helical) follow at residues 12-32 (VIGF…KKLY) and 37-57 (LTLA…IPVL).

Its subcellular location is the cell membrane. This is an uncharacterized protein from Methanocaldococcus jannaschii (strain ATCC 43067 / DSM 2661 / JAL-1 / JCM 10045 / NBRC 100440) (Methanococcus jannaschii).